The chain runs to 201 residues: MAHAEEPEDRTASTEPVVRPGSLLVSSTDLVEPAFRRTVIYVIEHNEAGSLGVVINRPSETAVHDVLPQWAPLTARPSALYVGGPVKRDAALCLATLRTGAQADGVRGLRRVHGRVVMVDLDSDPEVVAPLVEGVRIFAGYSGWTYGQLDSELQRDDWIVISALASDVLAPARVDVWAQVLRRQPLPLALLATHPIDVERN.

Belongs to the UPF0301 (AlgH) family.

The protein is UPF0301 protein ROP_34500 of Rhodococcus opacus (strain B4).